Consider the following 318-residue polypeptide: 2-keto-3-deoxygluconate permease (318 aa).

The next 10 helical transmembrane spans lie at 10 to 30 (IPGG…TFTP), 42 to 62 (GLIT…GASI), 76 to 96 (VLVI…GTFL), 105 to 125 (LLAG…NGGL), 139 to 159 (AGAF…VILG), 162 to 182 (GIAT…LIGF), 199 to 219 (VQTL…LAVI), 224 to 244 (FAGI…LIIA), 263 to 283 (AGAA…FAPV), and 289 to 309 (ALVA…TALW).

This sequence belongs to the KdgT transporter family.

It is found in the cell inner membrane. The enzyme catalyses 2-dehydro-3-deoxy-D-gluconate(in) + H(+)(in) = 2-dehydro-3-deoxy-D-gluconate(out) + H(+)(out). Catalyzes the proton-dependent uptake of 2-keto-3-deoxygluconate (KDG) into the cell. The protein is 2-keto-3-deoxygluconate permease of Pectobacterium carotovorum subsp. carotovorum (strain PC1).